A 258-amino-acid chain; its full sequence is Protein UL24 homolog (258 aa).

This sequence belongs to the herpesviridae UL24 family.

The protein localises to the virion. It is found in the host cytoplasm. The protein resides in the host nucleus. Its subcellular location is the host nucleolus. It localises to the host Golgi apparatus. Functionally, may participate in nuclear egress of viral particles. Plays a role in the dispersal of several host nucleolar proteins including NCL/nucleolin and NPM1. Since deletion of host NCL/nucleolin negatively impact on nuclear egress, UL24 supposedly acts on this process through its effect on host nucleoli. This is Protein UL24 homolog from Homo sapiens (Human).